Reading from the N-terminus, the 171-residue chain is Adenine phosphoribosyltransferase (171 aa).

The protein belongs to the purine/pyrimidine phosphoribosyltransferase family. Homodimer.

Its subcellular location is the cytoplasm. The enzyme catalyses AMP + diphosphate = 5-phospho-alpha-D-ribose 1-diphosphate + adenine. Its pathway is purine metabolism; AMP biosynthesis via salvage pathway; AMP from adenine: step 1/1. In terms of biological role, catalyzes a salvage reaction resulting in the formation of AMP, that is energically less costly than de novo synthesis. In Prochlorococcus marinus (strain MIT 9515), this protein is Adenine phosphoribosyltransferase.